The sequence spans 635 residues: Sodium-dependent multivitamin transporter (635 aa).

3 helical membrane-spanning segments follow: residues 24 to 44 (FSIM…AIGL), 68 to 88 (CLPV…ILGV), and 101 to 121 (FLGC…IPVF). An N-linked (GlcNAc...) asparagine glycan is attached at Asn-138. A run of 9 helical transmembrane segments spans residues 143–163 (VCGT…VLYA), 176–196 (LWLS…LGGL), 199–219 (VIWT…AVII), 256–276 (FWTL…VNQA), 297–317 (VFPF…VMFA), 336–356 (FVLY…GLFI), 396–416 (IMLS…MAYI), 428–448 (ISIF…GMFF), and 456–476 (AVVG…GSIV). N-linked (GlcNAc...) asparagine glycans are attached at residues Asn-489 and Asn-498. A helical membrane pass occupies residues 528–548 (LWYSAHNSTTVIVVGLIVSLL).

The protein belongs to the sodium:solute symporter (SSF) (TC 2.A.21) family. Interacts with PDZD11. May be glycosylated. Expressed in microvessels of the brain (at protein level). Expressed in heart, brain, placenta, lung, liver, skeletal muscle, kidney, and pancreas.

It is found in the cell membrane. It localises to the apical cell membrane. It carries out the reaction biotin(out) + 2 Na(+)(out) = biotin(in) + 2 Na(+)(in). The enzyme catalyses (R)-pantothenate(out) + 2 Na(+)(out) = (R)-pantothenate(in) + 2 Na(+)(in). The catalysed reaction is (R)-lipoate(out) + 2 Na(+)(out) = (R)-lipoate(in) + 2 Na(+)(in). It catalyses the reaction iodide(out) + 2 Na(+)(out) = iodide(in) + 2 Na(+)(in). In terms of biological role, sodium-dependent multivitamin transporter that mediates the electrogenic transport of pantothenate, biotin, lipoate and iodide. Functions as a Na(+)-coupled substrate symporter where the stoichiometry of Na(+):substrate is 2:1, creating an electrochemical Na(+) gradient used as driving force for substrate uptake. Required for biotin and pantothenate uptake in the intestine across the brush border membrane. Plays a role in the maintenance of intestinal mucosa integrity, by providing the gut mucosa with biotin. Contributes to the luminal uptake of biotin and pantothenate into the brain across the blood-brain barrier. The sequence is that of Sodium-dependent multivitamin transporter from Homo sapiens (Human).